The primary structure comprises 121 residues: Large ribosomal subunit protein bL12 (121 aa).

The protein belongs to the bacterial ribosomal protein bL12 family. In terms of assembly, homodimer. Part of the ribosomal stalk of the 50S ribosomal subunit. Forms a multimeric L10(L12)X complex, where L10 forms an elongated spine to which 2 to 4 L12 dimers bind in a sequential fashion. Binds GTP-bound translation factors.

Its function is as follows. Forms part of the ribosomal stalk which helps the ribosome interact with GTP-bound translation factors. Is thus essential for accurate translation. The protein is Large ribosomal subunit protein bL12 of Baumannia cicadellinicola subsp. Homalodisca coagulata.